Reading from the N-terminus, the 544-residue chain is Baeyer-Villiger monooxygenase (544 aa).

Phe-27, Glu-47, Trp-56, Asp-67, Tyr-73, and Val-119 together coordinate FAD.

Belongs to the FAD-binding monooxygenase family. FAD is required as a cofactor.

Functionally, catalyzes a Baeyer-Villiger oxidation reaction, i.e. the insertion of an oxygen atom into a carbon-carbon bond adjacent to a carbonyl, which converts ketones to esters or lactones using NADPH as an electron donor. Besides cycloalkanones, can use cyclic alpha,beta-unsaturated ketones as substrates, leading to enol-lactones. Can also act on methylated cycloalkanones and methylated cycloalkenones with high enantioselectivity in some cases. In Parvibaculum lavamentivorans (strain DS-1 / DSM 13023 / NCIMB 13966), this protein is Baeyer-Villiger monooxygenase.